Consider the following 193-residue polypeptide: Peptidyl-tRNA hydrolase (193 aa).

TRNA is bound at residue histidine 17. Histidine 22 functions as the Proton acceptor in the catalytic mechanism. The tRNA site is built by phenylalanine 68, asparagine 70, and asparagine 116.

This sequence belongs to the PTH family. As to quaternary structure, monomer.

It is found in the cytoplasm. It carries out the reaction an N-acyl-L-alpha-aminoacyl-tRNA + H2O = an N-acyl-L-amino acid + a tRNA + H(+). Hydrolyzes ribosome-free peptidyl-tRNAs (with 1 or more amino acids incorporated), which drop off the ribosome during protein synthesis, or as a result of ribosome stalling. Functionally, catalyzes the release of premature peptidyl moieties from peptidyl-tRNA molecules trapped in stalled 50S ribosomal subunits, and thus maintains levels of free tRNAs and 50S ribosomes. The protein is Peptidyl-tRNA hydrolase of Xanthomonas campestris pv. campestris (strain ATCC 33913 / DSM 3586 / NCPPB 528 / LMG 568 / P 25).